The sequence spans 62 residues: Large ribosomal subunit protein bL28 (62 aa).

Positions 1 to 27 (MARECYITGRKARSGNKRSHAMNKSKR) are disordered. Residues 10-27 (RKARSGNKRSHAMNKSKR) show a composition bias toward basic residues.

The protein belongs to the bacterial ribosomal protein bL28 family.

The polypeptide is Large ribosomal subunit protein bL28 (Shouchella clausii (strain KSM-K16) (Alkalihalobacillus clausii)).